A 518-amino-acid polypeptide reads, in one-letter code: Beta-TrCP (518 aa).

The span at 1–12 (MEGFSCSLQPPT) shows a compositional bias: polar residues. The segment at 1–24 (MEGFSCSLQPPTASEREDCNRDEP) is disordered. The segment covering 14-24 (SEREDCNRDEP) has biased composition (basic and acidic residues). Positions 119 to 157 (DHIAENILSYLDAKSLCSAELVCKEWYRVTSDGMLWKKL) constitute an F-box domain. WD repeat units lie at residues 230-258 (ETSKGVYCLQYDDQKIVSGLRDNTIKIWD), 270-298 (GHTGSVLCLQYDERVIITGSSDSTVRVWD), 310-338 (HHCEAVLHLRFNNGMMVTCSKDRSIAVWD), 353-381 (GHRAAVNVVDFDDKYIVSASGDRTIKVWN), 393-421 (GHKRGIACLQYRDRLVVSGSSDNTIRLWD), 433-461 (GHEELVRCIRFDNKRIVSGAYDGKIKVWD), and 482-510 (EHSGRVFRLQFDEFQIVSSSHDDTILIWD).

In terms of assembly, part of a SCF (SKP1-cullin-F-box) ubiquitin-protein ligase complex. Interacts with fbxo5.

Functionally, substrate recognition component of a SCF (SKP1-CUL1-F-box protein) E3 ubiquitin-protein ligase complex which mediates the ubiquitination and subsequent proteasomal degradation of target proteins. Probably recognizes and binds to phosphorylated target proteins. May participate in Wnt signaling. The sequence is that of Beta-TrCP (fbxw1) from Xenopus laevis (African clawed frog).